The sequence spans 193 residues: Ion-translocating oxidoreductase complex subunit A (193 aa).

6 helical membrane-spanning segments follow: residues 5 to 25, 39 to 59, 62 to 82, 102 to 122, 134 to 154, and 171 to 191; these read ALLFVSILLVNNFVLVKFLGL, IGMGMATTFVMTLGSMFSWLI, FILVPLDILYLRTMAFILVLA, LLGIFLPLITTNCAVLGVVLL, TIYGFGGAAGFSLVMVLFAAI, and SIALITAGLMSLAFMGFTGLV.

Belongs to the NqrDE/RnfAE family. The complex is composed of six subunits: RnfA, RnfB, RnfC, RnfD, RnfE and RnfG.

It is found in the cell inner membrane. Its function is as follows. Part of a membrane-bound complex that couples electron transfer with translocation of ions across the membrane. In Pectobacterium atrosepticum (strain SCRI 1043 / ATCC BAA-672) (Erwinia carotovora subsp. atroseptica), this protein is Ion-translocating oxidoreductase complex subunit A.